Consider the following 54-residue polypeptide: Kazal-type inhibitor-like protein (54 aa).

Residues 1–54 (MKVNCKGYPTKFCFGKPLPHCASDGKTYPNRCRFCNAFVKSHGLITLRYYGKCK) form the Kazal-like domain. Cystine bridges form between C5/C35, C13/C32, and C21/C53.

As to quaternary structure, may form disulfide-linked dimers or trimers (in vitro). In terms of tissue distribution, expressed by the venom gland.

The protein resides in the secreted. Functionally, partially inhibits trypsin in vitro at slightly acidic pH and concentrations in excess of 0.3 mM. Has no protease inhibitory activity at neutral or basic pH. Has no antibacterial activity. Shows no toxicity in vertebrates apart from transient paw edema in mouse. The chain is Kazal-type inhibitor-like protein from Bothriechis schlegelii (Eyelash palm pitviper).